A 596-amino-acid chain; its full sequence is Proteasome-associated ATPase (596 aa).

Positions 12 to 94 form a coiled coil; the sequence is SRWERETQDL…KEEIDRLAQP (83 aa). An ATP-binding site is contributed by 280–285; sequence GCGKTL. Residues 595-596 form a docks into pockets in the proteasome alpha-ring region; that stretch reads YL.

The protein belongs to the AAA ATPase family. In terms of assembly, homohexamer. Assembles into a hexameric ring structure that caps the 20S proteasome core. Strongly interacts with the prokaryotic ubiquitin-like protein Pup through a hydrophobic interface; the interacting region of ARC lies in its N-terminal coiled-coil domain. There is one Pup binding site per ARC hexamer ring. Upon ATP-binding, the C-terminus of ARC interacts with the alpha-rings of the proteasome core, possibly by binding to the intersubunit pockets.

The protein operates within protein degradation; proteasomal Pup-dependent pathway. Functionally, ATPase which is responsible for recognizing, binding, unfolding and translocation of pupylated proteins into the bacterial 20S proteasome core particle. May be essential for opening the gate of the 20S proteasome via an interaction with its C-terminus, thereby allowing substrate entry and access to the site of proteolysis. Thus, the C-termini of the proteasomal ATPase may function like a 'key in a lock' to induce gate opening and therefore regulate proteolysis. The sequence is that of Proteasome-associated ATPase from Stackebrandtia nassauensis (strain DSM 44728 / CIP 108903 / NRRL B-16338 / NBRC 102104 / LLR-40K-21).